A 376-amino-acid polypeptide reads, in one-letter code: N-acetyldiaminopimelate deacetylase (376 aa).

Asp69 is an active-site residue. Glu128 functions as the Proton acceptor in the catalytic mechanism.

Belongs to the peptidase M20A family. N-acetyldiaminopimelate deacetylase subfamily.

The catalysed reaction is N-acetyl-(2S,6S)-2,6-diaminopimelate + H2O = (2S,6S)-2,6-diaminopimelate + acetate. It functions in the pathway amino-acid biosynthesis; L-lysine biosynthesis via DAP pathway; LL-2,6-diaminopimelate from (S)-tetrahydrodipicolinate (acetylase route): step 3/3. Catalyzes the conversion of N-acetyl-diaminopimelate to diaminopimelate and acetate. The polypeptide is N-acetyldiaminopimelate deacetylase (Streptococcus pneumoniae (strain 70585)).